Here is a 115-residue protein sequence, read N- to C-terminus: Large ribosomal subunit protein bL20 (115 aa).

This sequence belongs to the bacterial ribosomal protein bL20 family.

Functionally, binds directly to 23S ribosomal RNA and is necessary for the in vitro assembly process of the 50S ribosomal subunit. It is not involved in the protein synthesizing functions of that subunit. The protein is Large ribosomal subunit protein bL20 of Chlorobium limicola (strain DSM 245 / NBRC 103803 / 6330).